Reading from the N-terminus, the 365-residue chain is GDSL lipase (365 aa).

An N-terminal signal peptide occupies residues 1-27 (MAVASRKLGALVLVAVLCLSLPTGCLS). Ser-40 functions as the Nucleophile in the catalytic mechanism. N-linked (GlcNAc...) asparagine glycosylation is found at Asn-189 and Asn-310. Residues Asp-318 and His-321 each act as charge relay system in the active site.

The protein belongs to the 'GDSL' lipolytic enzyme family. As to expression, restricted to the pericarp during achene maturation. Expressed in the leaves of mature plants and seedlings, as well as in buds and flowers. Present in disk florets.

The protein resides in the secreted. The protein localises to the extracellular space. The catalysed reaction is (Z,S)-pyrethrolone + (1R,3R)-chrysanthemoyl-CoA = pyrethrin I + CoA. It carries out the reaction (Z,S)-pyrethrolone + (1R,3R)-pyrethroyl-CoA = pyrethrin II + CoA. It catalyses the reaction (Z,S)-jasmololone + (1R,3R)-chrysanthemoyl-CoA = jasmolin I + CoA. The enzyme catalyses (Z,S)-cinerolone + (1R,3R)-chrysanthemoyl-CoA = cinerin I + CoA. The catalysed reaction is (Z,S)-jasmololone + (1R,3R)-pyrethroyl-CoA = jasmolin II + CoA. It carries out the reaction (Z,S)-cinerolone + (1R,3R)-pyrethroyl-CoA = cinerin II + CoA. It functions in the pathway isoprenoid biosynthesis. Its function is as follows. Component of the monoterpenoid pyrethrins biosynthesis; pyrethrins are widely used plant-derived pesticide. Acyltransferase that catalyzes the esterification of terpene acids and lipid alcohol substrates into pyrethrins; mediates the transfer of a chrysanthemoyl moiety from the coenzyme A (CoA) thio-ester chrysanthemoyl CoA to pyrethrolone, and, to a lower extent, to jasmololone and cinerolone thus producing pyrethrins (e.g. pyrethrin type I). Can also use pyrethroyl CoA as substrate. Also has esterase activity, being able to cleave the ester bond of pyrethrin I, p-nitrophenyl butanoate and p-nitrophenyl octanoate to produce pyrethrolone and p-nitrophenol, respectively. In Tanacetum cinerariifolium (Dalmatian daisy), this protein is GDSL lipase.